The sequence spans 63 residues: MARVCEVCAKGKVSGNVVSHSNRHNRRTWEPNLRRVRAIVNGTAKRINVCTRCLRSGRVERAL.

The protein belongs to the bacterial ribosomal protein bL28 family.

This chain is Large ribosomal subunit protein bL28, found in Alkaliphilus oremlandii (strain OhILAs) (Clostridium oremlandii (strain OhILAs)).